A 227-amino-acid polypeptide reads, in one-letter code: Protein lin-28 (227 aa).

Residues Met1 to Ser17 are compositionally biased toward polar residues. The interval Met1–Pro27 is disordered. A CSD domain is found at Arg52 to Glu120. 2 consecutive CCHC-type zinc fingers follow at residues Arg143 to Asn160 and Lys166 to Glu183. Residues Cys144, Cys147, His153, Cys158, Cys168, Cys171, His176, and Cys181 each coordinate Zn(2+). A disordered region spans residues Cys181–Glu227.

Belongs to the lin-28 family. As to quaternary structure, component of a complex at least containing lep-2, lin-28 and the long non-coding RNA lep-5, which mediates the degradation of lin-28. In terms of processing, cleavage by caspase ced-3 during larval development probably induces lin-28 degradation.

Its subcellular location is the cytoplasm. Heterochronic protein which controls the choice of stage specific cell fates. Regulates the timing of the second larval stage events (L2 events) in the hypodermis. May negatively regulate the larval to adult transition via the suppression of the microRNA (miRNA) let-7 during L3. Through this regulatory role, controls the timing of the sexual maturation of the nervous system. Also has a role in the fox-1-sex-1-mediated determination of sexual fate. Plays a role in governing the developmental timing of male tail tip morphogenesis. Plays a role in controlling the seam cell number during larval stages. Plays a role in vulval development. The chain is Protein lin-28 from Caenorhabditis elegans.